The sequence spans 429 residues: Bifunctional phosphoribosylaminoimidazole carboxylase/phosphoribosylaminoimidazole succinocarboxamide synthetase (429 aa).

The interval 7–264 (ASIEGYKLGK…WVAEQLADIV (258 aa)) is SAICAR synthetase. Residues 7-264 (ASIEGYKLGK…WVAEQLADIV (258 aa)) are SAICAR synthetase domain. Residues 265-429 (PKKDHLVVIL…DKELRGVRNA (165 aa)) are AIR carboxylase. Residues 270 to 429 (LVVILMGSAS…DKELRGVRNA (160 aa)) are AIR carboxylase domain. Ser-335 contributes to the CO2 binding site.

The protein in the N-terminal section; belongs to the SAICAR synthetase family. It in the C-terminal section; belongs to the AIR carboxylase family. Class II subfamily. In terms of assembly, homooctamer.

It carries out the reaction 5-amino-1-(5-phospho-D-ribosyl)imidazole-4-carboxylate + L-aspartate + ATP = (2S)-2-[5-amino-1-(5-phospho-beta-D-ribosyl)imidazole-4-carboxamido]succinate + ADP + phosphate + 2 H(+). The enzyme catalyses 5-amino-1-(5-phospho-D-ribosyl)imidazole-4-carboxylate + H(+) = 5-amino-1-(5-phospho-beta-D-ribosyl)imidazole + CO2. It functions in the pathway purine metabolism; IMP biosynthesis via de novo pathway; 5-amino-1-(5-phospho-D-ribosyl)imidazole-4-carboxamide from 5-amino-1-(5-phospho-D-ribosyl)imidazole-4-carboxylate: step 1/2. The protein operates within purine metabolism; IMP biosynthesis via de novo pathway; 5-amino-1-(5-phospho-D-ribosyl)imidazole-4-carboxylate from 5-amino-1-(5-phospho-D-ribosyl)imidazole (carboxylase route): step 1/1. Its function is as follows. Bifunctional phosphoribosylaminoimidazole carboxylase and phosphoribosylaminoimidazole succinocarboxamide synthetase catalyzing two reactions of the de novo purine biosynthetic pathway. In Drosophila melanogaster (Fruit fly), this protein is Bifunctional phosphoribosylaminoimidazole carboxylase/phosphoribosylaminoimidazole succinocarboxamide synthetase.